The chain runs to 320 residues: L-lactate dehydrogenase A (320 aa).

The substrate site is built by Arg-88, Asn-120, and Arg-151. Asn-120 serves as a coordination point for NAD(+). His-175 functions as the Proton acceptor in the catalytic mechanism.

It belongs to the LDH/MDH superfamily. LDH family. In terms of assembly, homotetramer.

The protein resides in the cytoplasm. It carries out the reaction (S)-lactate + NAD(+) = pyruvate + NADH + H(+). The protein operates within fermentation; pyruvate fermentation to lactate; (S)-lactate from pyruvate: step 1/1. Converts pyruvate to lactate. In Rhizopus oryzae (Mucormycosis agent), this protein is L-lactate dehydrogenase A (LDHA).